A 204-amino-acid polypeptide reads, in one-letter code: FMN-dependent NADH:quinone oxidoreductase 1 (204 aa).

Residues S14, 20-22 (SMS), and 99-102 (MYNF) contribute to the FMN site.

It belongs to the azoreductase type 1 family. Homodimer. The cofactor is FMN.

The enzyme catalyses 2 a quinone + NADH + H(+) = 2 a 1,4-benzosemiquinone + NAD(+). The catalysed reaction is N,N-dimethyl-1,4-phenylenediamine + anthranilate + 2 NAD(+) = 2-(4-dimethylaminophenyl)diazenylbenzoate + 2 NADH + 2 H(+). Quinone reductase that provides resistance to thiol-specific stress caused by electrophilic quinones. Functionally, also exhibits azoreductase activity. Catalyzes the reductive cleavage of the azo bond in aromatic azo compounds to the corresponding amines. The polypeptide is FMN-dependent NADH:quinone oxidoreductase 1 (Hahella chejuensis (strain KCTC 2396)).